Reading from the N-terminus, the 239-residue chain is tRNA (guanine-N(1)-)-methyltransferase (239 aa).

S-adenosyl-L-methionine-binding positions include G108 and 127-132 (LGDYVL).

The protein belongs to the RNA methyltransferase TrmD family. Homodimer.

It is found in the cytoplasm. The enzyme catalyses guanosine(37) in tRNA + S-adenosyl-L-methionine = N(1)-methylguanosine(37) in tRNA + S-adenosyl-L-homocysteine + H(+). Functionally, specifically methylates guanosine-37 in various tRNAs. The sequence is that of tRNA (guanine-N(1)-)-methyltransferase from Streptococcus pneumoniae (strain JJA).